The primary structure comprises 1058 residues: Carbamoyl phosphate synthase large chain (1058 aa).

Positions 1–401 (MPKRKDIQKI…SLLKACRSLE (401 aa)) are carboxyphosphate synthetic domain. Residues arginine 129, arginine 169, glycine 175, glycine 176, arginine 208, isoleucine 210, glutamate 215, glycine 241, isoleucine 242, histidine 243, glutamine 284, and glutamate 298 each contribute to the ATP site. The ATP-grasp 1 domain maps to 133 to 327 (KQLMQELDQP…IAKLAAKIAV (195 aa)). Mg(2+) contacts are provided by glutamine 284, glutamate 298, and asparagine 300. Mn(2+)-binding residues include glutamine 284, glutamate 298, and asparagine 300. The oligomerization domain stretch occupies residues 402–546 (IGVCHNEMTS…YSTYELENES (145 aa)). Residues 547 to 929 (VQSNKESILV…ALYKAFEANN (383 aa)) are carbamoyl phosphate synthetic domain. One can recognise an ATP-grasp 2 domain in the interval 671–861 (EKALKELGIP…MAQIATKLIL (191 aa)). Arginine 707, serine 746, isoleucine 748, glutamate 752, glycine 777, valine 778, histidine 779, serine 780, glutamine 820, and glutamate 832 together coordinate ATP. Mg(2+) contacts are provided by glutamine 820, glutamate 832, and asparagine 834. Mn(2+) contacts are provided by glutamine 820, glutamate 832, and asparagine 834. One can recognise an MGS-like domain in the interval 930-1058 (SHLSEFGQIV…ESRCFNIEAI (129 aa)). The segment at 930 to 1058 (SHLSEFGQIV…ESRCFNIEAI (129 aa)) is allosteric domain.

This sequence belongs to the CarB family. In terms of assembly, composed of two chains; the small (or glutamine) chain promotes the hydrolysis of glutamine to ammonia, which is used by the large (or ammonia) chain to synthesize carbamoyl phosphate. Tetramer of heterodimers (alpha,beta)4. Mg(2+) is required as a cofactor. Requires Mn(2+) as cofactor.

The catalysed reaction is hydrogencarbonate + L-glutamine + 2 ATP + H2O = carbamoyl phosphate + L-glutamate + 2 ADP + phosphate + 2 H(+). It carries out the reaction hydrogencarbonate + NH4(+) + 2 ATP = carbamoyl phosphate + 2 ADP + phosphate + 2 H(+). It functions in the pathway amino-acid biosynthesis; L-arginine biosynthesis; carbamoyl phosphate from bicarbonate: step 1/1. Its pathway is pyrimidine metabolism; UMP biosynthesis via de novo pathway; (S)-dihydroorotate from bicarbonate: step 1/3. In terms of biological role, large subunit of the glutamine-dependent carbamoyl phosphate synthetase (CPSase). CPSase catalyzes the formation of carbamoyl phosphate from the ammonia moiety of glutamine, carbonate, and phosphate donated by ATP, constituting the first step of 2 biosynthetic pathways, one leading to arginine and/or urea and the other to pyrimidine nucleotides. The large subunit (synthetase) binds the substrates ammonia (free or transferred from glutamine from the small subunit), hydrogencarbonate and ATP and carries out an ATP-coupled ligase reaction, activating hydrogencarbonate by forming carboxy phosphate which reacts with ammonia to form carbamoyl phosphate. This chain is Carbamoyl phosphate synthase large chain, found in Streptococcus pyogenes serotype M1.